Consider the following 166-residue polypeptide: Regulatory protein RecX (166 aa).

Belongs to the RecX family.

It localises to the cytoplasm. In terms of biological role, modulates RecA activity. This chain is Regulatory protein RecX, found in Klebsiella pneumoniae (strain 342).